We begin with the raw amino-acid sequence, 315 residues long: Ferrochelatase (315 aa).

Fe cation is bound by residues His193 and Glu273.

This sequence belongs to the ferrochelatase family.

It localises to the cytoplasm. It carries out the reaction heme b + 2 H(+) = protoporphyrin IX + Fe(2+). Its pathway is porphyrin-containing compound metabolism; protoheme biosynthesis; protoheme from protoporphyrin-IX: step 1/1. In terms of biological role, catalyzes the ferrous insertion into protoporphyrin IX. This chain is Ferrochelatase, found in Wolbachia sp. subsp. Drosophila simulans (strain wRi).